Consider the following 252-residue polypeptide: dITP/XTP pyrophosphatase (252 aa).

7 to 12 contacts substrate; sequence THNEGK. Aspartate 74 functions as the Proton acceptor in the catalytic mechanism. Aspartate 74 serves as a coordination point for Mg(2+). Substrate-binding positions include serine 75 and 193–196; that span reads FGYD. The disordered stretch occupies residues 201–224; the sequence is PDDQPAGRVSTEPDHEGEPLTSAE. Substrate contacts are provided by residues lysine 230 and 235–236; that span reads HR.

The protein belongs to the HAM1 NTPase family. Homodimer. It depends on Mg(2+) as a cofactor.

The catalysed reaction is XTP + H2O = XMP + diphosphate + H(+). It carries out the reaction dITP + H2O = dIMP + diphosphate + H(+). The enzyme catalyses ITP + H2O = IMP + diphosphate + H(+). Pyrophosphatase that catalyzes the hydrolysis of nucleoside triphosphates to their monophosphate derivatives, with a high preference for the non-canonical purine nucleotides XTP (xanthosine triphosphate), dITP (deoxyinosine triphosphate) and ITP. Seems to function as a house-cleaning enzyme that removes non-canonical purine nucleotides from the nucleotide pool, thus preventing their incorporation into DNA/RNA and avoiding chromosomal lesions. The polypeptide is dITP/XTP pyrophosphatase (Bifidobacterium longum subsp. infantis (strain ATCC 15697 / DSM 20088 / JCM 1222 / NCTC 11817 / S12)).